A 347-amino-acid chain; its full sequence is Cell shape-determining protein MreB (347 aa).

ATP is bound by residues 19-21, 168-170, 216-219, and 296-299; these read TAN, GGT, ERIK, and GGAL.

This sequence belongs to the FtsA/MreB family. As to quaternary structure, forms polymers.

It is found in the cytoplasm. In terms of biological role, forms membrane-associated dynamic filaments that are essential for cell shape determination. Acts by regulating cell wall synthesis and cell elongation, and thus cell shape. A feedback loop between cell geometry and MreB localization may maintain elongated cell shape by targeting cell wall growth to regions of negative cell wall curvature. This chain is Cell shape-determining protein MreB, found in Escherichia coli O6:H1 (strain CFT073 / ATCC 700928 / UPEC).